Consider the following 478-residue polypeptide: Proline--tRNA ligase (478 aa).

This sequence belongs to the class-II aminoacyl-tRNA synthetase family. ProS type 3 subfamily. Homodimer.

It is found in the cytoplasm. It carries out the reaction tRNA(Pro) + L-proline + ATP = L-prolyl-tRNA(Pro) + AMP + diphosphate. Its function is as follows. Catalyzes the attachment of proline to tRNA(Pro) in a two-step reaction: proline is first activated by ATP to form Pro-AMP and then transferred to the acceptor end of tRNA(Pro). In Clostridium botulinum (strain Kyoto / Type A2), this protein is Proline--tRNA ligase.